A 279-amino-acid polypeptide reads, in one-letter code: Diaminopimelate epimerase (279 aa).

Substrate is bound by residues Asn14 and Gln68. Cys77 acts as the Proton donor in catalysis. Substrate is bound by residues 78 to 79 (GN), Asn191, and 207 to 208 (ER). The active-site Proton acceptor is the Cys217. 218–219 (GT) provides a ligand contact to substrate.

This sequence belongs to the diaminopimelate epimerase family. In terms of assembly, homodimer.

It is found in the cytoplasm. It catalyses the reaction (2S,6S)-2,6-diaminopimelate = meso-2,6-diaminopimelate. It functions in the pathway amino-acid biosynthesis; L-lysine biosynthesis via DAP pathway; DL-2,6-diaminopimelate from LL-2,6-diaminopimelate: step 1/1. In terms of biological role, catalyzes the stereoinversion of LL-2,6-diaminopimelate (L,L-DAP) to meso-diaminopimelate (meso-DAP), a precursor of L-lysine. The chain is Diaminopimelate epimerase from Methanothrix thermoacetophila (strain DSM 6194 / JCM 14653 / NBRC 101360 / PT) (Methanosaeta thermophila).